Consider the following 401-residue polypeptide: Carbamoyl phosphate synthase small chain (401 aa).

Positions Met1–Asp203 are CPSase. L-glutamine is bound by residues Ser56, Gly255, and Gly257. The Glutamine amidotransferase type-1 domain occupies His207–Glu395. Cys284 serves as the catalytic Nucleophile. L-glutamine contacts are provided by Leu285, Gln288, Asn326, Gly328, and Phe329. Residues His368 and Glu370 contribute to the active site.

It belongs to the CarA family. As to quaternary structure, composed of two chains; the small (or glutamine) chain promotes the hydrolysis of glutamine to ammonia, which is used by the large (or ammonia) chain to synthesize carbamoyl phosphate. Tetramer of heterodimers (alpha,beta)4.

The enzyme catalyses hydrogencarbonate + L-glutamine + 2 ATP + H2O = carbamoyl phosphate + L-glutamate + 2 ADP + phosphate + 2 H(+). It catalyses the reaction L-glutamine + H2O = L-glutamate + NH4(+). Its pathway is amino-acid biosynthesis; L-arginine biosynthesis; carbamoyl phosphate from bicarbonate: step 1/1. It participates in pyrimidine metabolism; UMP biosynthesis via de novo pathway; (S)-dihydroorotate from bicarbonate: step 1/3. Its function is as follows. Small subunit of the glutamine-dependent carbamoyl phosphate synthetase (CPSase). CPSase catalyzes the formation of carbamoyl phosphate from the ammonia moiety of glutamine, carbonate, and phosphate donated by ATP, constituting the first step of 2 biosynthetic pathways, one leading to arginine and/or urea and the other to pyrimidine nucleotides. The small subunit (glutamine amidotransferase) binds and cleaves glutamine to supply the large subunit with the substrate ammonia. The sequence is that of Carbamoyl phosphate synthase small chain from Agrobacterium fabrum (strain C58 / ATCC 33970) (Agrobacterium tumefaciens (strain C58)).